Reading from the N-terminus, the 103-residue chain is uncharacterized protein (103 aa).

A compositionally biased stretch (basic residues) spans 1–10 (MVVKKSKPKN). Disordered regions lie at residues 1 to 38 (MVVK…KGKK) and 77 to 103 (AVFS…NEKK).

This is an uncharacterized protein from Schizosaccharomyces pombe (strain 972 / ATCC 24843) (Fission yeast).